The primary structure comprises 498 residues: ATP synthase subunit beta, chloroplastic (498 aa).

172–179 (GGAGVGKT) lines the ATP pocket.

Belongs to the ATPase alpha/beta chains family. F-type ATPases have 2 components, CF(1) - the catalytic core - and CF(0) - the membrane proton channel. CF(1) has five subunits: alpha(3), beta(3), gamma(1), delta(1), epsilon(1). CF(0) has four main subunits: a(1), b(1), b'(1) and c(9-12).

It is found in the plastid. It localises to the chloroplast thylakoid membrane. The catalysed reaction is ATP + H2O + 4 H(+)(in) = ADP + phosphate + 5 H(+)(out). In terms of biological role, produces ATP from ADP in the presence of a proton gradient across the membrane. The catalytic sites are hosted primarily by the beta subunits. The sequence is that of ATP synthase subunit beta, chloroplastic from Sorghum bicolor (Sorghum).